Reading from the N-terminus, the 954-residue chain is MMDTKVDQTIQPKFYVDKKLSKSFDNKLDEDIFNYPFKKESFLKSEKFSFEHTKDSLWKCIKEKAKKKSDMEYFNCVNNLCCKFICTIRKYVKYFLYLKDSSYEIYNINLYNNNNMNIINNKNITNNKNITNNINNSFSNDYINYNHNYNHLNNSSSSKHNNYNVNNIDEKNIKNDYNTYHNIYEQIFFKYNPSFYEYLMFTLMKKLIHYKNYIFNKTKKINNSYNNNDIKNIDGFLIFQNINFEEIFLNTFYSSFPFKLFLHSLYMIFICFIYFVVLYFMLLKKIYTHPFIFHLSVLKFLFDIIFFLSFILYPLFLRLKRIDKIIYSSYISSYIFVCVTFLYSFIIFKCSSYSVKMNSNTYQNNFVFQNMLFLLINIIYICIFCFLKNYMILYSFLYNCRFSIFCILFIFLYYYLFFSLDFYRIIHLPLDNFFFPFLCFLFFSFLFIFKIIMSLYYEYVYEKKYRILFVKKNNLIEKRITKRKNTNINNAYFTKYFSIDNTIPTSPIEDILNNFKHILETINIIEENPNHNLTTNIMKIKEKIKNCDNILRTKNINQVQIGKYRKFEKVYNIWCLDKMYLNYPLNQEETKSFLSNSLNRISFNSFSNMHSLLSSKFQEHYNDIYDWNGNIENIYKANTFISIGYKLLYPLGVLEANFDKEKLKKFLFRICSYYNDIPYHTSLHAAQVAHFSKSMLFMLDMNHKISAIDEFCLHISSLCHDTGHPGLNNYFLINSENNLALTYNDNSVLENYHCSLLFKTLKNPNYNIFEHYPYHIFISCKKNIIKAILSTDMKNHFEYISDFRTSKEFIDYDNLSNDQIWQIFCLILKASDIGHSTLEWNKHLEWTLKINEEFYLQGLLEKSLNIQNSFLCDINTMNKLALSQIDFLKHLCIPLFNELNYICKNNDVYTHCIQPIENNIERWESHKNDNQNLGLHEKYKEENLLSKLELIKFE.

The Cytoplasmic segment spans residues 1–259 (MMDTKVDQTI…NTFYSSFPFK (259 aa)). A helical transmembrane segment spans residues 260–280 (LFLHSLYMIFICFIYFVVLYF). Residues 281 to 296 (MLLKKIYTHPFIFHLS) are Extracellular-facing. Residues 297 to 317 (VLKFLFDIIFFLSFILYPLFL) traverse the membrane as a helical segment. Residues 318–327 (RLKRIDKIIY) lie on the Cytoplasmic side of the membrane. A helical membrane pass occupies residues 328-348 (SSYISSYIFVCVTFLYSFIIF). The Extracellular portion of the chain corresponds to 349–365 (KCSSYSVKMNSNTYQNN). A helical membrane pass occupies residues 366–386 (FVFQNMLFLLINIIYICIFCF). The Cytoplasmic portion of the chain corresponds to 387–401 (LKNYMILYSFLYNCR). The chain crosses the membrane as a helical span at residues 402 to 422 (FSIFCILFIFLYYYLFFSLDF). Residues 423 to 432 (YRIIHLPLDN) are Extracellular-facing. Residues 433–453 (FFFPFLCFLFFSFLFIFKIIM) traverse the membrane as a helical segment. Residues 454-954 (SLYYEYVYEK…LSKLELIKFE (501 aa)) are Cytoplasmic-facing. The 345-residue stretch at 586 to 930 (NQEETKSFLS…ERWESHKNDN (345 aa)) folds into the PDEase domain. The active-site Proton donor is the His-680. 680-684 (HTSLH) serves as a coordination point for 3',5'-cyclic GMP. The Zn(2+) site is built by His-684, His-720, Asp-721, and Asp-832. Asp-721, Asp-832, and Gln-884 together coordinate 3',5'-cyclic GMP. Residue Asp-721 coordinates Mg(2+).

The protein belongs to the cyclic nucleotide phosphodiesterase family. Zn(2+) serves as cofactor. It depends on Mg(2+) as a cofactor.

The protein resides in the membrane. It carries out the reaction 3',5'-cyclic GMP + H2O = GMP + H(+). The protein operates within purine metabolism; 3',5'-cyclic GMP degradation; GMP from 3',5'-cyclic GMP: step 1/1. Its activity is regulated as follows. Not inhibited by cAMP. Inhibited by zaprinast. In terms of biological role, specifically hydrolyzes the second messenger cGMP, which is a key regulator of many important physiological processes. The polypeptide is cGMP-specific 3',5'-cyclic phosphodiesterase alpha (Plasmodium falciparum (isolate 3D7)).